We begin with the raw amino-acid sequence, 342 residues long: Platelet-activating factor receptor (342 aa).

At methionine 1–threonine 16 the chain is on the extracellular side. The helical transmembrane segment at leucine 17–tryptophan 38 threads the bilayer. At valine 39–isoleucine 54 the chain is on the cytoplasmic side. The chain crosses the membrane as a helical span at residues phenylalanine 55–isoleucine 74. Residues valine 75 to asparagine 91 lie on the Extracellular side of the membrane. A disulfide bridge connects residues cysteine 90 and cysteine 173. A helical transmembrane segment spans residues valine 92 to tyrosine 113. The Cytoplasmic segment spans residues asparagine 114 to arginine 133. Residues glycine 134–leucine 155 traverse the membrane as a helical segment. At aspartate 156–valine 184 the chain is on the extracellular side. N-linked (GlcNAc...) asparagine glycosylation is present at asparagine 169. A helical transmembrane segment spans residues leucine 185 to cysteine 205. The Cytoplasmic segment spans residues asparagine 206–methionine 233. The helical transmembrane segment at valine 234–proline 254 threads the bilayer. At tryptophan 255–glutamine 276 the chain is on the extracellular side. A helical membrane pass occupies residues valine 277–leucine 296. The Cytoplasmic segment spans residues threonine 297 to asparagine 342.

Belongs to the G-protein coupled receptor 1 family. Interacts with ARRB1. In terms of tissue distribution, expressed in the placenta, lung, left and right heart ventricles, heart atrium, leukocytes and differentiated HL-60 granulocytes.

It is found in the cell membrane. Functionally, receptor for platelet activating factor, a chemotactic phospholipid mediator that possesses potent inflammatory, smooth-muscle contractile and hypotensive activity. Seems to mediate its action via a G protein that activates a phosphatidylinositol-calcium second messenger system. This Homo sapiens (Human) protein is Platelet-activating factor receptor (PTAFR).